The sequence spans 345 residues: S-adenosylmethionine:tRNA ribosyltransferase-isomerase (345 aa).

This sequence belongs to the QueA family. Monomer.

The protein resides in the cytoplasm. It carries out the reaction 7-aminomethyl-7-carbaguanosine(34) in tRNA + S-adenosyl-L-methionine = epoxyqueuosine(34) in tRNA + adenine + L-methionine + 2 H(+). The protein operates within tRNA modification; tRNA-queuosine biosynthesis. Its function is as follows. Transfers and isomerizes the ribose moiety from AdoMet to the 7-aminomethyl group of 7-deazaguanine (preQ1-tRNA) to give epoxyqueuosine (oQ-tRNA). The chain is S-adenosylmethionine:tRNA ribosyltransferase-isomerase from Anaeromyxobacter dehalogenans (strain 2CP-1 / ATCC BAA-258).